Reading from the N-terminus, the 274-residue chain is Bis(5'-nucleosyl)-tetraphosphatase, symmetrical (274 aa).

It belongs to the Ap4A hydrolase family.

The catalysed reaction is P(1),P(4)-bis(5'-adenosyl) tetraphosphate + H2O = 2 ADP + 2 H(+). Its function is as follows. Hydrolyzes diadenosine 5',5'''-P1,P4-tetraphosphate to yield ADP. This is Bis(5'-nucleosyl)-tetraphosphatase, symmetrical from Shewanella baltica (strain OS195).